The chain runs to 319 residues: Acetyl esterase (319 aa).

The Involved in the stabilization of the negatively charged intermediate by the formation of the oxyanion hole motif lies at H91 to G93. Catalysis depends on residues S165, D262, and H292.

The protein belongs to the 'GDXG' lipolytic enzyme family. As to quaternary structure, homodimer. Interacts with MalT and MelA.

The protein resides in the cytoplasm. Displays esterase activity towards short chain fatty esters (acyl chain length of up to 8 carbons). Able to hydrolyze triacetylglycerol (triacetin) and tributyrylglycerol (tributyrin), but not trioleylglycerol (triolein) or cholesterol oleate. Negatively regulates MalT activity by antagonizing maltotriose binding. Inhibits MelA galactosidase activity. This Shigella boydii serotype 4 (strain Sb227) protein is Acetyl esterase.